The following is a 190-amino-acid chain: Xanthine phosphoribosyltransferase (190 aa).

The xanthine site is built by Leu20 and Asn27. 128 to 132 (ANGHA) is a 5-phospho-alpha-D-ribose 1-diphosphate binding site. Xanthine is bound at residue Lys156.

It belongs to the purine/pyrimidine phosphoribosyltransferase family. Xpt subfamily. Homodimer.

The protein resides in the cytoplasm. The enzyme catalyses XMP + diphosphate = xanthine + 5-phospho-alpha-D-ribose 1-diphosphate. It participates in purine metabolism; XMP biosynthesis via salvage pathway; XMP from xanthine: step 1/1. Converts the preformed base xanthine, a product of nucleic acid breakdown, to xanthosine 5'-monophosphate (XMP), so it can be reused for RNA or DNA synthesis. The protein is Xanthine phosphoribosyltransferase of Pseudomonas aeruginosa (strain LESB58).